Here is a 244-residue protein sequence, read N- to C-terminus: Monothiol glutaredoxin-4 (244 aa).

The Thioredoxin domain occupies 3-110 (VVEIKSQDQF…FVKSLEILSN (108 aa)). The segment at 116–143 (ANNAKGPKSTSDEESSGSSDDEEDETEE) is disordered. The segment covering 127–143 (DEESSGSSDDEEDETEE) has biased composition (acidic residues). Residues 146–244 (NARLVKLVQA…DPEYFQHALQ (99 aa)) form the Glutaredoxin domain. K163 is a binding site for glutathione. C171 is a [2Fe-2S] cluster binding site. Glutathione is bound by residues R200, F212, and 225 to 226 (LD).

It belongs to the glutaredoxin family. Monothiol subfamily. In terms of assembly, homodimer. Heterodimer with FRA2.

In terms of biological role, monothiol glutaredoxin involved in the biogenesis of iron-sulfur clusters. Binds one iron-sulfur cluster per dimer. The iron-sulfur cluster is bound between subunits, and is complexed by a bound glutathione and a cysteine residue from each subunit. In Saccharomyces cerevisiae (strain ATCC 204508 / S288c) (Baker's yeast), this protein is Monothiol glutaredoxin-4 (GRX4).